The primary structure comprises 753 residues: Inactive protein-tyrosine phosphatase egg-4 (753 aa).

2 disordered regions span residues threonine 26–asparagine 46 and serine 75–glycine 145. Residues asparagine 35–asparagine 46 show a composition bias toward low complexity. Composition is skewed to basic and acidic residues over residues alanine 84 to leucine 94 and valine 129 to glycine 145. One can recognise a Tyrosine-protein phosphatase domain in the interval methionine 408–phenylalanine 661.

The protein belongs to the protein-tyrosine phosphatase family. In terms of assembly, part of a complex, consisting of pseudophosphatases egg-3, egg-4, egg-5 and kinase mbk-2; this complex is required for the oocyte-to-zygote transition. Interacts (via tyrosine-protein phosphatase domain) with kinase mbk-2 (via 'Tyr-619' and 'Tyr-621'); mbk-2 tyrosine phosphorylation enhances the interaction. The interaction inhibits mbk-2 kinase activity and is required for mbk-2 oocyte cortex localization. Interacts with egg-3.

Its subcellular location is the cytoplasm. The protein resides in the cell cortex. Functionally, inactive phosphatase which acts redundantly with egg-5 in the oocyte-to-zygote transition. Required for the polarization of cortical actin cytoskeleton rearrangement in the oocyte before and after fertilization. Together with egg-5, required for the cortical localization of kinase mbk-2 and for the inhibition of mbk-2 kinase activity in maturing oocyte until the end of meiosis I. Also required for kinase mbk-2, pseudophosphatase egg-3 and chitin synthase chs-1 localization to cytoplasmic foci after fertilization. The polypeptide is Inactive protein-tyrosine phosphatase egg-4 (Caenorhabditis elegans).